We begin with the raw amino-acid sequence, 449 residues long: Tubulin alpha-1B chain (449 aa).

A GTP-binding site is contributed by Gln-11. At Lys-40 the chain carries N6-acetyllysine. GTP-binding residues include Glu-71, Ser-140, Gly-144, Thr-145, Thr-179, Asn-206, and Asn-228. Residue Glu-71 coordinates Mg(2+). Glu-254 is an active-site residue.

It belongs to the tubulin family. In terms of assembly, dimer of alpha and beta chains. A typical microtubule is a hollow water-filled tube with an outer diameter of 25 nm and an inner diameter of 15 nM. Alpha-beta heterodimers associate head-to-tail to form protofilaments running lengthwise along the microtubule wall with the beta-tubulin subunit facing the microtubule plus end conferring a structural polarity. Microtubules usually have 13 protofilaments but different protofilament numbers can be found in some organisms and specialized cells. Mg(2+) serves as cofactor. In terms of processing, acetylation of alpha chains at Lys-40 stabilizes microtubules and affects affinity and processivity of microtubule motors. This modification has a role in multiple cellular functions, ranging from cell motility, cell cycle progression or cell differentiation to intracellular trafficking and signaling.

It localises to the cytoplasm. The protein resides in the cytoskeleton. The protein localises to the spindle. It is found in the nucleus. The enzyme catalyses GTP + H2O = GDP + phosphate + H(+). Its function is as follows. Tubulin is the major constituent of microtubules, a cylinder consisting of laterally associated linear protofilaments composed of alpha- and beta-tubulin heterodimers. Microtubules grow by the addition of GTP-tubulin dimers to the microtubule end, where a stabilizing cap forms. Below the cap, tubulin dimers are in GDP-bound state, owing to GTPase activity of alpha-tubulin. This chain is Tubulin alpha-1B chain (ALTBN), found in Physarum polycephalum (Slime mold).